A 714-amino-acid polypeptide reads, in one-letter code: EtfAB:quinone oxidoreductase (714 aa).

The next 6 membrane-spanning stretches (helical) occupy residues 25–45 (YEWL…FGFW), 87–107 (AGWM…AAGI), 125–145 (IGFS…VMVL), 164–184 (DGWI…IEGL), 207–227 (PFGW…MLMW), and 236–256 (MAIA…HIFA). 4Fe-4S ferredoxin-type domains follow at residues 293-324 (WKDL…LNPK) and 375-405 (YDVV…HIPK). [4Fe-4S] cluster is bound by residues cysteine 302, cysteine 305, cysteine 308, cysteine 312, cysteine 386, cysteine 389, cysteine 392, and cysteine 396.

Might constitute a membrane-associated complex with EtfA (Swol_0697), EtfB (Swol_0696), and the butyryl-CoA dehydrogenase Swol_1933 and/or Swol_2052. The cofactor is [4Fe-4S] cluster.

It localises to the cell membrane. It functions in the pathway lipid metabolism; butanoate metabolism. In terms of biological role, oxidoreductase involved in syntrophic growth of S.wolfei with butyrate. Is presumed to link the electron flow from butyryl-CoA dehydrogenases to the membrane, in conjunction with the electron transfer flavoprotein EtfAB. May transfer electrons to the menaquinone pool of the membrane. The protein is EtfAB:quinone oxidoreductase of Syntrophomonas wolfei subsp. wolfei (strain DSM 2245B / Goettingen).